Reading from the N-terminus, the 334-residue chain is snRNA-activating protein complex subunit 2 (334 aa).

Disordered stretches follow at residues 137 to 200 (LHSK…STEE) and 271 to 306 (AGGS…ELKS). A compositionally biased stretch (low complexity) spans 167–180 (IPSSAPAAPSSAPR).

In terms of assembly, part of the SNAPc complex composed of 5 subunits: SNAPC1, SNAPC2, SNAPC3, SNAPC4 and SNAPC5. SNAPC2 interacts with TBP and SNAPC4.

The protein resides in the nucleus. In terms of biological role, part of the SNAPc complex required for the transcription of both RNA polymerase II and III small-nuclear RNA genes. Binds to the proximal sequence element (PSE), a non-TATA-box basal promoter element common to these 2 types of genes. Recruits TBP and BRF2 to the U6 snRNA TATA box. The protein is snRNA-activating protein complex subunit 2 (SNAPC2) of Homo sapiens (Human).